A 338-amino-acid chain; its full sequence is Heat-inducible transcription repressor HrcA (338 aa).

The protein belongs to the HrcA family.

In terms of biological role, negative regulator of class I heat shock genes (grpE-dnaK-dnaJ and groELS operons). Prevents heat-shock induction of these operons. The polypeptide is Heat-inducible transcription repressor HrcA (Nitrosomonas eutropha (strain DSM 101675 / C91 / Nm57)).